The chain runs to 362 residues: MKPYLLLTPGPLTTSETVKETMMTDWCTWDEDYNLHIVEALRKELVGIATRNTEEYTSVLLQGSGTYCVEAVIGAAIGKNDKLLICSNGAYGDRMGNIAEYYHIDYELLAFDETEQVSVDYVDDYLSNNSDVTHVAFVHCETTTGILNPLKELAHVVKMHGKKLIVDAMSSFGGIPMDVSELGIDFLISSANKCIQGVPGFGFIIARRSELVRCKGVARSLSLDIYDQWETMEKGHGKWRFTSPTHVVRAFKQALTELIEEGGVEARHRRYCENHRVLVEGMRSLGFVTLLDDAIQSPIITSFLYPKTGFDFKAFYTALKSKGFVIYPGKISKADTFRIGNIGDVHPEDFARLVEVVRETEY.

N6-(pyridoxal phosphate)lysine is present on Lys-193.

The protein belongs to the class-V pyridoxal-phosphate-dependent aminotransferase family. PhnW subfamily. Homodimer. Requires pyridoxal 5'-phosphate as cofactor.

The catalysed reaction is (2-aminoethyl)phosphonate + pyruvate = phosphonoacetaldehyde + L-alanine. Involved in phosphonate degradation. This is 2-aminoethylphosphonate--pyruvate transaminase from Bacteroides fragilis (strain YCH46).